The following is a 646-amino-acid chain: Threonine--tRNA ligase (646 aa).

The TGS domain occupies 1–63; the sequence is MAQISLTFPD…ETDAKIAIHT (63 aa). A catalytic region spans residues 247-544; sequence DHRKLGREME…LIENYAGKLP (298 aa). Cys344, His395, and His521 together coordinate Zn(2+).

Belongs to the class-II aminoacyl-tRNA synthetase family. As to quaternary structure, homodimer. The cofactor is Zn(2+).

Its subcellular location is the cytoplasm. It carries out the reaction tRNA(Thr) + L-threonine + ATP = L-threonyl-tRNA(Thr) + AMP + diphosphate + H(+). Catalyzes the attachment of threonine to tRNA(Thr) in a two-step reaction: L-threonine is first activated by ATP to form Thr-AMP and then transferred to the acceptor end of tRNA(Thr). Also edits incorrectly charged L-seryl-tRNA(Thr). The sequence is that of Threonine--tRNA ligase from Cereibacter sphaeroides (strain ATCC 17029 / ATH 2.4.9) (Rhodobacter sphaeroides).